We begin with the raw amino-acid sequence, 255 residues long: Small ribosomal subunit protein uS2 (255 aa).

Residues 230–255 are disordered; that stretch reads QGSSGRDLGASSEVPVEPALEEAAEG.

The protein belongs to the universal ribosomal protein uS2 family.

The protein is Small ribosomal subunit protein uS2 of Rhizobium johnstonii (strain DSM 114642 / LMG 32736 / 3841) (Rhizobium leguminosarum bv. viciae).